Here is a 469-residue protein sequence, read N- to C-terminus: UDP-N-acetylmuramate--L-alanine ligase (469 aa).

Position 123 to 129 (G123 to T129) interacts with ATP.

Belongs to the MurCDEF family.

The protein localises to the cytoplasm. The catalysed reaction is UDP-N-acetyl-alpha-D-muramate + L-alanine + ATP = UDP-N-acetyl-alpha-D-muramoyl-L-alanine + ADP + phosphate + H(+). The protein operates within cell wall biogenesis; peptidoglycan biosynthesis. Its function is as follows. Cell wall formation. The polypeptide is UDP-N-acetylmuramate--L-alanine ligase (Synechococcus sp. (strain CC9605)).